An 88-amino-acid polypeptide reads, in one-letter code: Large ribosomal subunit protein bL31B (88 aa).

The protein belongs to the bacterial ribosomal protein bL31 family. Type B subfamily. Part of the 50S ribosomal subunit.

In Corynebacterium diphtheriae (strain ATCC 700971 / NCTC 13129 / Biotype gravis), this protein is Large ribosomal subunit protein bL31B.